The sequence spans 309 residues: Bifunctional methylenetetrahydrofolate dehydrogenase/cyclohydrolase, mitochondrial (309 aa).

The protein belongs to the tetrahydrofolate dehydrogenase/cyclohydrolase family. Homodimer. The cofactor is Mg(2+).

It is found in the mitochondrion. The enzyme catalyses (6R)-5,10-methylene-5,6,7,8-tetrahydrofolate + NAD(+) = (6R)-5,10-methenyltetrahydrofolate + NADH. It catalyses the reaction (6R)-5,10-methenyltetrahydrofolate + H2O = (6R)-10-formyltetrahydrofolate + H(+). May play a role in spermatogenesis. The protein is Bifunctional methylenetetrahydrofolate dehydrogenase/cyclohydrolase, mitochondrial (Nmdmc) of Drosophila melanogaster (Fruit fly).